The primary structure comprises 577 residues: Sulfite reductase [NADPH] hemoprotein beta-component 2 (577 aa).

[4Fe-4S] cluster-binding residues include cysteine 441, cysteine 447, cysteine 486, and cysteine 490. Cysteine 490 contacts siroheme.

This sequence belongs to the nitrite and sulfite reductase 4Fe-4S domain family. Alpha(8)-beta(8). The alpha component is a flavoprotein, the beta component is a hemoprotein. Siroheme is required as a cofactor. It depends on [4Fe-4S] cluster as a cofactor.

It carries out the reaction hydrogen sulfide + 3 NADP(+) + 3 H2O = sulfite + 3 NADPH + 4 H(+). It participates in sulfur metabolism; hydrogen sulfide biosynthesis; hydrogen sulfide from sulfite (NADPH route): step 1/1. Its function is as follows. Component of the sulfite reductase complex that catalyzes the 6-electron reduction of sulfite to sulfide. This is one of several activities required for the biosynthesis of L-cysteine from sulfate. The chain is Sulfite reductase [NADPH] hemoprotein beta-component 2 from Pectobacterium carotovorum subsp. carotovorum (strain PC1).